Here is a 789-residue protein sequence, read N- to C-terminus: Probable phosphoketolase 1 (789 aa).

This sequence belongs to the XFP family. Requires thiamine diphosphate as cofactor.

This Rhizobium meliloti (strain 1021) (Ensifer meliloti) protein is Probable phosphoketolase 1.